We begin with the raw amino-acid sequence, 989 residues long: MSDNDKPKLGMRAPLGIKRTVETSKVKQSFSHGRSNTVIVETKRRRVINKPGSGDAATAAETAKKQAEPVENTPNKDTAVTQTATKNETVATPAAAPAPAPAAAPKPVAAEATAQETSKAAPAAAQPVAEKEAAAPASAEAAKSAAIKVTDRGAKKTTEKNGANASGNRPSGNRSQDNRGRQGGRGSQNKNQTRSGGQPRQPRTLAHRDLASRQELQARLLREAEESRLQALEEARRREDRLKQEADLEEQRRIEEKRRLEAEAKVEAEKQAALKEKEKAEAKARAKAEKEAKAAQAKTAGAAEGEEKTRRPAKAAAPKAREERSESPRSPAPRRFTPVSPPRREAPRPAMRDRKGEDRRQSGKLTVTKALSGDEGGARARSLAALRRAREKDKRANQNRAQQVRQIRDVVVPEAITVQELANRMAERGADLVKALFKMGVAVTLTQTIDQDTAELLVTEFGHNIKRVSESDVEIDSSSDVDPEETLKSRPPVVTIMGHVDHGKTSLLDALRGSDVVRGEAGGITQHIGAYQVESPSGEKITLLDTPGHEAFSEMRARGANVTDIVIIVVAADDGLRPQTVEAIDHARAADVPIIIAINKMDKPEANPQRIREALLQYNVQVEAMGGDVQDVEISAAKKTGLDELIEKILLQAEMLELKANPDRAAEGTVVEAKLDRGRGPVATILVRRGTLKVGDIFVVGEFSGRVRAMTDAQGKNQKEAGPSMPVEVLGLSGVPQAGDTLTVVESEARAREVAAYRAEIALRKRTTAQPASLESMFSALKDKQAVEYPLLIKADTQGSVEAIAGALNKISNEDIRVRILHQGVGGITESDVSLAAASGAPIIGFHVRPNSKARDIARRDGVALKFYDVIYDLIDEIKAAMAGKLGPEYFETVVGKAEIREVFSAGKHGRAAGLLVLEGYIRQKLRARVLRNDVIIYNGSIASLRRFKDDVPEVRAGLECGITLEGSTDIKAGDIVETFEVEERARTL.

2 disordered regions span residues 43–219 and 234–379; these read KRRR…LQAR and EARR…GGAR. A compositionally biased stretch (polar residues) spans 72–87; sequence NTPNKDTAVTQTATKN. Residues 105 to 146 are compositionally biased toward low complexity; sequence PKPVAAEATAQETSKAAPAAAQPVAEKEAAAPASAEAAKSAA. Over residues 149–159 the composition is skewed to basic and acidic residues; sequence VTDRGAKKTTE. The span at 160 to 171 shows a compositional bias: polar residues; sequence KNGANASGNRPS. Residues 234 to 293 are compositionally biased toward basic and acidic residues; it reads EARRREDRLKQEADLEEQRRIEEKRRLEAEAKVEAEKQAALKEKEKAEAKARAKAEKEAK. Residues 294–303 are compositionally biased toward low complexity; sequence AAQAKTAGAA. A compositionally biased stretch (basic and acidic residues) spans 342–361; it reads PRREAPRPAMRDRKGEDRRQ. The 171-residue stretch at 489 to 659 folds into the tr-type G domain; it reads SRPPVVTIMG…LLQAEMLELK (171 aa). Positions 498-505 are G1; that stretch reads GHVDHGKT. A GTP-binding site is contributed by 498–505; that stretch reads GHVDHGKT. The tract at residues 523 to 527 is G2; that stretch reads GITQH. The tract at residues 545-548 is G3; sequence DTPG. GTP contacts are provided by residues 545 to 549 and 599 to 602; these read DTPGH and NKMD. Positions 599–602 are G4; it reads NKMD. The G5 stretch occupies residues 635-637; that stretch reads SAA.

This sequence belongs to the TRAFAC class translation factor GTPase superfamily. Classic translation factor GTPase family. IF-2 subfamily.

The protein localises to the cytoplasm. In terms of biological role, one of the essential components for the initiation of protein synthesis. Protects formylmethionyl-tRNA from spontaneous hydrolysis and promotes its binding to the 30S ribosomal subunits. Also involved in the hydrolysis of GTP during the formation of the 70S ribosomal complex. The chain is Translation initiation factor IF-2 from Zymomonas mobilis subsp. mobilis (strain ATCC 31821 / ZM4 / CP4).